Reading from the N-terminus, the 358-residue chain is Ion-translocating oxidoreductase complex subunit D (358 aa).

A run of 4 helical transmembrane segments spans residues 19-39 (IMLW…YYFG), 41-61 (GVVL…FIAI), 79-99 (LTAL…VIII), and 125-145 (IGYV…MPPI). At Thr-186 the chain carries FMN phosphoryl threonine. Transmembrane regions (helical) follow at residues 220 to 240 (FAQG…FLIL), 248 to 268 (IPVA…FTGF), 271 to 291 (LSAI…FIAT), 297 to 317 (SITP…VYLI), and 321 to 341 (GNYP…VPLI).

It belongs to the NqrB/RnfD family. In terms of assembly, the complex is composed of six subunits: RnfA, RnfB, RnfC, RnfD, RnfE and RnfG. FMN serves as cofactor.

The protein localises to the cell inner membrane. In terms of biological role, part of a membrane-bound complex that couples electron transfer with translocation of ions across the membrane. This chain is Ion-translocating oxidoreductase complex subunit D, found in Haemophilus influenzae (strain PittGG).